The sequence spans 93 residues: Small ribosomal subunit protein uS19 (93 aa).

The protein belongs to the universal ribosomal protein uS19 family.

Protein S19 forms a complex with S13 that binds strongly to the 16S ribosomal RNA. The polypeptide is Small ribosomal subunit protein uS19 (Anaplasma marginale (strain Florida)).